Here is a 1018-residue protein sequence, read N- to C-terminus: Thrombospondin type-1 domain-containing protein 4 (1018 aa).

The first 25 residues, 1–25, serve as a signal peptide directing secretion; sequence MVSHFMGSLSVLCFLLLLGFQFVCP. Positions 53 to 307 constitute a TSP type-1 1 domain; the sequence is PGVWGAWGPW…YKLCNTNVCP (255 aa). Disordered regions lie at residues 111-235, 254-279, and 534-623; these read SVPL…RSGL, PAAS…ATQS, and SPQV…NWKQ. Positions 187–200 are enriched in basic residues; that stretch reads QRLRRQKLSSRHSR. The segment covering 201-210 has biased composition (low complexity); it reads SQGASSARHG. The span at 259–279 shows a compositional bias: polar residues; sequence LFHSPETSNNHGVGTHGATQS. Composition is skewed to basic and acidic residues over residues 556-577 and 592-603; these read RSQE…RGEA and RHPDRFSPHRPD. TSP type-1 domains lie at 676 to 737, 739 to 792, 793 to 851, 852 to 911, and 912 to 968; these read CPAF…KICS, WQIR…DMGP, CAKS…GPCT, GKVE…HLKP, and CGAK…QDCV. Positions 971-1008 constitute a PLAC domain; that stretch reads VDENCKDKYYNCNVVVQARLCVYNYYKTACCASCTRVA.

In terms of assembly, interacts with FBN1. May interact with TGFB1.

The protein localises to the secreted. It is found in the extracellular space. Its subcellular location is the extracellular matrix. Its function is as follows. Promotes FBN1 matrix assembly. Attenuates TGFB signaling, possibly by accelerating the sequestration of large latent complexes of TGFB or active TGFB by FBN1 microfibril assembly, thereby negatively regulating the expression of TGFB regulatory targets, such as POSTN. This is Thrombospondin type-1 domain-containing protein 4 (THSD4) from Homo sapiens (Human).